The primary structure comprises 91 residues: MSFDRSKTPRWRPGYRFQYEPAQKGHVLLYPEGMIKLNDSAALIGGLIDGERDVAAIISELEIQFPGVAELGEDIEQFMEVARAQHWIELA.

The protein belongs to the PqqD family. In terms of assembly, monomer. Interacts with PqqE.

The protein operates within cofactor biosynthesis; pyrroloquinoline quinone biosynthesis. In terms of biological role, functions as a PqqA binding protein and presents PqqA to PqqE, in the pyrroloquinoline quinone (PQQ) biosynthetic pathway. The sequence is that of PqqA binding protein from Pseudomonas fluorescens (strain ATCC BAA-477 / NRRL B-23932 / Pf-5).